The chain runs to 449 residues: Elongation factor 1-alpha 1 (449 aa).

Positions 5 to 230 constitute a tr-type G domain; sequence KVHMNLVVVG…DMLEPPVRPS (226 aa). The segment at 14-21 is G1; sequence GHVDAGKS. Position 14–21 (14–21) interacts with GTP; sequence GHVDAGKS. Positions 70–74 are G2; the sequence is GITID. A G3 region spans residues 91–94; the sequence is DAPG. GTP is bound by residues 91–95 and 153–156; these read DAPGH and NKMD. The tract at residues 153–156 is G4; sequence NKMD. Residues 194-196 are G5; the sequence is SGW. Residue glutamate 362 is modified to 5-glutamyl glycerylphosphorylethanolamine.

It belongs to the TRAFAC class translation factor GTPase superfamily. Classic translation factor GTPase family. EF-Tu/EF-1A subfamily. Phosphatidylethanolamine (PE) is a direct precursor of the ethanolamine-phosphoglycerol (EPG) moiety.

The protein resides in the cytoplasm. Its function is as follows. This protein promotes the GTP-dependent binding of aminoacyl-tRNA to the A-site of ribosomes during protein biosynthesis. The sequence is that of Elongation factor 1-alpha 1 (TEF1) from Trypanosoma brucei brucei (strain 927/4 GUTat10.1).